The following is an 828-amino-acid chain: Vacuolar transporter chaperone complex subunit 2 (828 aa).

The region spanning 1 to 146 (MLFGVKLANE…PKYPSVKSLL (146 aa)) is the SPX domain. The Cytoplasmic portion of the chain corresponds to 1–693 (MLFGVKLANE…EAKVWLANER (693 aa)). The important for inositol polyphosphate binding stretch occupies residues 127 to 134 (KIVKKHDK). Ser-182, Ser-187, Ser-196, Ser-264, Ser-583, Ser-615, and Ser-616 each carry phosphoserine. The tract at residues 580 to 636 (RRLSNLKEPQHQAAVPVSQEENERITSQGDLEADGSSDEETEQEPHSKRSKKVRRRK) is disordered. Residues 610 to 621 (LEADGSSDEETE) are compositionally biased toward acidic residues. Thr-620 bears the Phosphothreonine mark. Ser-626 carries the post-translational modification Phosphoserine. The span at 627-636 (KRSKKVRRRK) shows a compositional bias: basic residues. Ser-657 carries the phosphoserine modification. Residues 694–716 (TFNRWLSVTSLLSVLTFSIYNSV) traverse the membrane as a helical segment. At 717–727 (KKAEYPTLANY) the chain is on the vacuolar side. A helical membrane pass occupies residues 728-748 (MAYVYFGLTIFCALWSYSIYM). Over 749–766 (KRVDIIQQRSGQHLDAPL) the chain is Cytoplasmic. Residues 767 to 787 (GPVLVSIVLFVTLVVNFVMAF) traverse the membrane as a helical segment. Residues 788 to 828 (RNAAKSRQELQIQNLEVPERIPEVLRPLQNYLFKLMGPSSD) lie on the Vacuolar side of the membrane.

The protein belongs to the VTC2/3 family. In terms of assembly, the VTC core complex is an integral membrane heterooligomer composed of the catalytic subunit VTC4 and the accessory subunits VTC1, VTC2 and VTC3. The complex exists in 2 different sub-complexes: VTC1-VTC2-VCT4 and VCT1-VTC3-VTC4. The VCT1-VTC3-VTC4 subcomplex is mostly found on the vacuolar membrane. The VTC1-VTC2-VCT4 subcomplex is observed in the cell periphery, probably ER and nuclear envelope, but localizes to the vacuole under phosphate starvation. Each subunit contains 3 transmembrane helices. VTC1 is a small membrane protein without hydrophilic domain. VTC2, VTC3 and VTC4 are related and have 2 hydrophilic domains that face the cytosol, an N-terminal SPX domain and the central core domain. The central core in VTC4 is the catalytic domain, with the essential catalytic lysine replaced by isoleucine and leucine in VTC2 and VTC3, respectively. The core complex associates with the accessory subunit VTC5. The complex interacts with the v-SNARE NYV1 and with the V(0) subunit of V-ATPase VPH1.

Its subcellular location is the vacuole membrane. The protein resides in the cytoplasm. It localises to the cell cortex. The protein localises to the endoplasmic reticulum membrane. It is found in the cytoplasmic vesicle. Its subcellular location is the autophagosome membrane. Accessory subunit of the vacuolar transporter chaperone (VTC) complex. The VTC complex acts as a vacuolar polyphosphate polymerase that catalyzes the synthesis of inorganic polyphosphate (polyP) via transfer of phosphate from ATP to a growing polyP chain, releasing ADP. VTC exposes its catalytic domain VTC4 to the cytosol, where the growing polyP chain winds through a tunnel-shaped pocket, integrating cytoplasmic polymer synthesis with polyP membrane translocation. The VTC complex carries 9 vacuolar transmembrane domains, which are likely to constitute the translocation channel into the organelle lumen. PolyP synthesis is tightly coupled to its transport into the vacuole lumen, in order to avoid otherwise toxic intermediates in the cytosol, and it depends on the proton gradient across the membrane, formed by V-ATPase. Binds inositol hexakisphosphate (Ins6P) and similar inositol polyphosphates, such as 5-diphospho-inositol pentakisphosphate (5-InsP7); these are important intracellular signaling molecules. Inositol polyphosphate binding promotes vacuolar polyphosphate synthesis. The VTC complex also plays a role in vacuolar membrane fusion. Required for SEC18/NSF activity in SNARE priming, membrane binding of LMA1 and V(0) trans-complex formation. The polypeptide is Vacuolar transporter chaperone complex subunit 2 (Saccharomyces cerevisiae (strain ATCC 204508 / S288c) (Baker's yeast)).